A 309-amino-acid polypeptide reads, in one-letter code: MENVTFVSNSHQRPAADNLQKLKSLLTNTRQQIKSQTQQVTIKNLYVSSFTLVCFRSGKLTISNNHDTIYCDEPGMLVLKKEQVVNVTLEEVNGHMDFDILEIPTQRLGALYALIPNEQQTKMAVPTEKAQKIFYTPDFPARREVFEHLKTAFSCTKDTSKGCSNCNNKSCIENEELIPYFLLFLLTAFLRLPESYEIILSSAQITLKERVYNIISSSPSRQWKLTDVADHIFMSTSTLKRKLAEEGTSFSDIYLSARMNQAAKLLRIGNHNVNAVALKCGYDSTSYFIQCFKKYFKTTPSTFIKMANH.

The 98-residue stretch at 209–306 (ERVYNIISSS…KTTPSTFIKM (98 aa)) folds into the HTH araC/xylS-type domain. DNA-binding regions (H-T-H motif) lie at residues 226–247 (TDVADHIFMSTSTLKRKLAEEG) and 273–296 (VNAVALKCGYDSTSYFIQCFKKYF).

In Salmonella typhimurium (strain SL1344), this protein is Transcriptional regulator HilD (hilD).